Consider the following 183-residue polypeptide: ATP-dependent protease subunit HslV (183 aa).

Residue Thr-13 is part of the active site. Na(+) contacts are provided by Gly-168, Cys-171, and Thr-174.

Belongs to the peptidase T1B family. HslV subfamily. As to quaternary structure, a double ring-shaped homohexamer of HslV is capped on each side by a ring-shaped HslU homohexamer. The assembly of the HslU/HslV complex is dependent on binding of ATP.

The protein localises to the cytoplasm. The catalysed reaction is ATP-dependent cleavage of peptide bonds with broad specificity.. With respect to regulation, allosterically activated by HslU binding. In terms of biological role, protease subunit of a proteasome-like degradation complex believed to be a general protein degrading machinery. This Stenotrophomonas maltophilia (strain R551-3) protein is ATP-dependent protease subunit HslV.